Here is a 177-residue protein sequence, read N- to C-terminus: Large ribosomal subunit protein uL6 (177 aa).

It belongs to the universal ribosomal protein uL6 family. Part of the 50S ribosomal subunit.

Functionally, this protein binds to the 23S rRNA, and is important in its secondary structure. It is located near the subunit interface in the base of the L7/L12 stalk, and near the tRNA binding site of the peptidyltransferase center. This is Large ribosomal subunit protein uL6 from Klebsiella pneumoniae subsp. pneumoniae (strain ATCC 700721 / MGH 78578).